The primary structure comprises 240 residues: DUP240 protein DFP1 (240 aa).

Positions 1-29 are disordered; the sequence is MQPYLKKNTHATDDPKASPLKEGSPDNPE. 2 helical membrane passes run 61-81 and 84-104; these read IMIN…DIWF and VLSP…VLQI.

The protein belongs to the DUP/COS family.

It localises to the membrane. This chain is DUP240 protein DFP1, found in Saccharomyces cerevisiae (Baker's yeast).